A 397-amino-acid polypeptide reads, in one-letter code: DNA-directed RNA polymerase subunit Rpo1C (397 aa).

This sequence belongs to the RNA polymerase beta' chain family. As to quaternary structure, part of the RNA polymerase complex.

The protein localises to the cytoplasm. The catalysed reaction is RNA(n) + a ribonucleoside 5'-triphosphate = RNA(n+1) + diphosphate. In terms of biological role, DNA-dependent RNA polymerase (RNAP) catalyzes the transcription of DNA into RNA using the four ribonucleoside triphosphates as substrates. Forms part of the jaw domain. In Methanosarcina acetivorans (strain ATCC 35395 / DSM 2834 / JCM 12185 / C2A), this protein is DNA-directed RNA polymerase subunit Rpo1C.